The sequence spans 225 residues: Insulin-induced gene 2 protein (225 aa).

Residues 1–28 (MAEGETESPGPKKCGPYISSVTSQSVNL) are Cytoplasmic-facing. The chain crosses the membrane as a helical span at residues 29–51 (MIRGVVLFFIGVFLALVLNLLQI). The Lumenal portion of the chain corresponds to 52 to 70 (QRNVTLFPPDVIASIFSSA). A helical transmembrane segment spans residues 71-88 (WWVPPCCGTASAVIGLLY). Over 89-103 (PCIDRHLGEPHKFKR) the chain is Cytoplasmic. Residues 104–126 (EWSSVMRCVAVFVGINHASAKVD) traverse the membrane as a helical segment. At 127-129 (FDN) the chain is on the lumenal side. Residues 130 to 148 (NIQLSLTLAALSIGLWWTF) traverse the membrane as a helical segment. Residues 149-153 (DRSRS) are Cytoplasmic-facing. A Phosphoserine modification is found at serine 151. The helical transmembrane segment at 154 to 175 (GFGLGVGIAFLATLVTQLLVYN) threads the bilayer. At 176 to 189 (GVYQYTSPDFLYVR) the chain is on the lumenal side. The helical transmembrane segment at 190–207 (SWLPCIFFAGGITMGNIG) threads the bilayer. The Cytoplasmic portion of the chain corresponds to 208–225 (RQLAMYECKVIAEKSHQE). Cysteine 215 is modified (cysteine sulfenic acid (-SOH); alternate). Cysteine 215 participates in a covalent cross-link: Glycyl cysteine thioester (Cys-Gly) (interchain with G-Cter in ubiquitin); alternate. Residues 219–225 (AEKSHQE) carry the KxHxx motif.

Belongs to the INSIG family. As to quaternary structure, interacts with SCAP; interaction is direct and only takes place in the presence of sterols; it prevents interaction between SCAP and the coat protein complex II (COPII). Associates with the SCAP-SREBP complex (composed of SCAP and SREBF1/SREBP1 or SREBF2/SREBP2); association is mediated via its interaction with SCAP and only takes place in the presence of sterols. Interacts with RNF139. Interacts with RNF145. Post-translationally, phosphorylation at Ser-151 by PCK1 reduces binding to oxysterol, disrupting the interaction between INSIG2 and SCAP, thereby promoting nuclear translocation of SREBP proteins (SREBF1/SREBP1 or SREBF2/SREBP2) and subsequent transcription of downstream lipogenesis-related genes. Polyubiquitinated by AMFR/gp78 at Cys-215 in some tissues such as adipose tissues, undifferentiated myoblasts and liver, leading to its degradation. In differentiated myotubes, Cys-215 oxidation prevents ubiquitination at the same site, resulting in protein stabilization. In terms of processing, oxidized at Cys-215 in differentiated myotubes, preventing ubiquitination at the same site, and resulting in protein stabilization.

The protein resides in the endoplasmic reticulum membrane. Oxysterol-binding protein that mediates feedback control of cholesterol synthesis by controlling both endoplasmic reticulum to Golgi transport of SCAP and degradation of HMGCR. Acts as a negative regulator of cholesterol biosynthesis by mediating the retention of the SCAP-SREBP complex in the endoplasmic reticulum, thereby blocking the processing of sterol regulatory element-binding proteins (SREBPs) SREBF1/SREBP1 and SREBF2/SREBP2. Binds oxysterol, including 22-hydroxycholesterol, 24-hydroxycholesterol, 25-hydroxycholesterol and 27-hydroxycholesterol, regulating interaction with SCAP and retention of the SCAP-SREBP complex in the endoplasmic reticulum. In presence of oxysterol, interacts with SCAP, retaining the SCAP-SREBP complex in the endoplasmic reticulum, thereby preventing SCAP from escorting SREBF1/SREBP1 and SREBF2/SREBP2 to the Golgi. Sterol deprivation or phosphorylation by PCK1 reduce oxysterol-binding, disrupting the interaction between INSIG2 and SCAP, thereby promoting Golgi transport of the SCAP-SREBP complex, followed by processing and nuclear translocation of SREBF1/SREBP1 and SREBF2/SREBP2. Also regulates cholesterol synthesis by regulating degradation of HMGCR: initiates the sterol-mediated ubiquitin-mediated endoplasmic reticulum-associated degradation (ERAD) of HMGCR via recruitment of the reductase to the ubiquitin ligase RNF139. In Papio anubis (Olive baboon), this protein is Insulin-induced gene 2 protein.